The chain runs to 461 residues: Phosphomethylpyrimidine synthase (461 aa).

Residues Asn-80, Met-109, Tyr-139, His-175, 195 to 197, 236 to 239, and Glu-275 each bind substrate; these read SRG and DSLR. A Zn(2+)-binding site is contributed by His-279. Position 302 (Tyr-302) interacts with substrate. His-343 lines the Zn(2+) pocket. [4Fe-4S] cluster contacts are provided by Cys-423, Cys-426, and Cys-431.

The protein belongs to the ThiC family. [4Fe-4S] cluster serves as cofactor.

The enzyme catalyses 5-amino-1-(5-phospho-beta-D-ribosyl)imidazole + S-adenosyl-L-methionine = 4-amino-2-methyl-5-(phosphooxymethyl)pyrimidine + CO + 5'-deoxyadenosine + formate + L-methionine + 3 H(+). It functions in the pathway cofactor biosynthesis; thiamine diphosphate biosynthesis. In terms of biological role, catalyzes the synthesis of the hydroxymethylpyrimidine phosphate (HMP-P) moiety of thiamine from aminoimidazole ribotide (AIR) in a radical S-adenosyl-L-methionine (SAM)-dependent reaction. The protein is Phosphomethylpyrimidine synthase of Picosynechococcus sp. (strain ATCC 27264 / PCC 7002 / PR-6) (Agmenellum quadruplicatum).